The sequence spans 99 residues: Plastocyanin (99 aa).

The Plastocyanin-like domain maps to 1–99 (VEVLLGASDG…AGMVGQVTVN (99 aa)). Residues His-37, Cys-84, His-87, and Met-92 each coordinate Cu cation.

Belongs to the plastocyanin family. Cu(2+) is required as a cofactor.

It is found in the plastid. Its subcellular location is the chloroplast thylakoid membrane. Participates in electron transfer between P700 and the cytochrome b6-f complex in photosystem I. In Vicia faba (Broad bean), this protein is Plastocyanin (PETE).